A 267-amino-acid chain; its full sequence is Protein HesA, heterocyst (267 aa).

This sequence belongs to the HesA/MoeB/ThiF family.

The chain is Protein HesA, heterocyst (hesA1) from Trichormus variabilis (strain ATCC 29413 / PCC 7937) (Anabaena variabilis).